The following is a 261-amino-acid chain: Homeobox protein engrailed-2b (261 aa).

Basic and acidic residues-rich tracts occupy residues 1-21 (MEENDHSNRDVERQDSGDESN), 53-72 (GRRKEGSRRDEINIVERENR), and 100-116 (KKTDISTDESLKSRAET). Disordered stretches follow at residues 1–24 (MEENDHSNRDVERQDSGDESNRAI), 53–125 (GRRK…SSDS), and 152–176 (DRPSSGPRSRKPKKKTPTKEDKRPR). A DNA-binding region (homeobox) is located at residues 172–231 (DKRPRTAFTAEQLQRLKNEFQNNRYLTEQRRQALAQELGLNESQIKIWFQNKRAKIKKAT).

The protein belongs to the engrailed homeobox family.

Its subcellular location is the nucleus. The polypeptide is Homeobox protein engrailed-2b (eng2b) (Danio rerio (Zebrafish)).